Here is a 545-residue protein sequence, read N- to C-terminus: Serine/threonine-protein kinase PAK 1 (545 aa).

The disordered stretch occupies residues 1–75 (MSNNGVDIQD…KKREKERPEI (75 aa)). Ser-2 carries the post-translational modification N-acetylserine. Ser-21 carries the post-translational modification Phosphoserine; by PKB and autocatalysis. At Ser-57 the chain carries Phosphoserine; by autocatalysis. The segment at 70–140 (KERPEISLPS…YNSKKTSNSK (71 aa)) is autoregulatory region. Residues 75–88 (ISLPSDFEHTIHVG) enclose the CRIB domain. A GTPase-binding region spans residues 75–105 (ISLPSDFEHTIHVGFDAVTGEFTGMPEQWAR). Thr-84 bears the Phosphothreonine; by OXSR1 mark. Ser-115 is subject to Phosphoserine. Phosphotyrosine occurs at positions 131 and 142. Residues Ser-144 and Ser-149 each carry the phosphoserine; by autocatalysis modification. The disordered stretch occupies residues 150 to 198 (AEDYNSSNTLNVKTVSETPAVPPVSEDDEDDDDDATPPPVIAPRPEHTK). Residues 152-166 (DYNSSNTLNVKTVSE) show a composition bias toward polar residues. A Phosphotyrosine; by JAK2 modification is found at Tyr-153. Position 174 is a phosphoserine (Ser-174). Residues 174 to 184 (SEDDEDDDDDA) are compositionally biased toward acidic residues. Phosphothreonine is present on Thr-185. Ser-199 bears the Phosphoserine; by autocatalysis mark. Phosphotyrosine; by JAK2 is present on Tyr-201. At Ser-204 the chain carries Phosphoserine; by autocatalysis. The tract at residues 210–250 (PVTPTRDVATSPISPTENNTTPPDALTRNTEKQKKKPKMSD) is disordered. Phosphothreonine occurs at positions 212 and 219. Ser-220 and Ser-223 each carry phosphoserine. Residues 220-231 (SPISPTENNTTP) are compositionally biased toward polar residues. A phosphothreonine mark is found at Thr-225, Thr-229, and Thr-230. In terms of domain architecture, Protein kinase spans 270–521 (YTPFEKIGQG…AKELLQHQFL (252 aa)). ATP is bound at residue 276–284 (IGQGASGTV). The residue at position 285 (Tyr-285) is a Phosphotyrosine; by JAK2. Lys-299 is a binding site for ATP. Asp-389 functions as the Proton acceptor in the catalytic mechanism. Thr-423 carries the post-translational modification Phosphothreonine; by autocatalysis, BRSK2 and PDPK1.

The protein belongs to the protein kinase superfamily. STE Ser/Thr protein kinase family. STE20 subfamily. In terms of assembly, homodimer in its autoinhibited state. Active as monomer. Interacts with GIT1. Component of cytoplasmic complexes, which also contains PXN, ARHGEF7 and GIT1. Interacts with NISCH. Interacts with DVL1; mediates the formation of a DVL1, MUSK and PAK1 ternary complex involved in AChR clustering. Binds to the caspase-cleaved p110 isoform of CDC2L1 and CDC2L2, p110C, but not the full-length proteins. Interacts with ARHGEF7. Interacts tightly with GTP-bound but not GDP-bound CDC42/P21 and RAC1. Interacts with SCRIB. Interacts with PDPK1. Interacts (via kinase domain) with RAF1. Interacts with NCK1 and NCK2. Interacts with TBCB. Interacts with BRSK2. Interacts with SNAI1. Interacts with CIB1 (via N-terminal region); the interaction is direct, promotes PAK1 activity and occurs in a calcium-dependent manner. Interacts with INPP5K. Interacts with gamma-tubulin. Interacts with RHOU; the interaction promotes PAK1 activation. Requires Mg(2+) as cofactor. In terms of processing, autophosphorylated in trans, meaning that in a dimer, one kinase molecule phosphorylates the other one. Activated by autophosphorylation at Thr-423 in response to a conformation change, triggered by interaction with GTP-bound CDC42 or RAC1. Activated by phosphorylation at Thr-423 by BRSK2 and by PDPK1. Phosphorylated by JAK2 in response to PRL; this increases PAK1 kinase activity. Phosphorylated at Ser-21 by PKB/AKT; this reduces interaction with NCK1 and association with focal adhesion sites. Upon DNA damage, phosphorylated at Thr-212 and translocates to the nucleoplasm. Phosphorylated at tyrosine residues, which can be enhanced by NTN1.

Its subcellular location is the cytoplasm. The protein localises to the cell junction. The protein resides in the focal adhesion. It is found in the cell projection. It localises to the lamellipodium. Its subcellular location is the cell membrane. The protein localises to the ruffle membrane. The protein resides in the invadopodium. It is found in the nucleus. It localises to the nucleoplasm. Its subcellular location is the chromosome. The protein localises to the cytoskeleton. The protein resides in the microtubule organizing center. It is found in the centrosome. The enzyme catalyses L-seryl-[protein] + ATP = O-phospho-L-seryl-[protein] + ADP + H(+). It carries out the reaction L-threonyl-[protein] + ATP = O-phospho-L-threonyl-[protein] + ADP + H(+). Phosphorylation of Thr-84 by OXSR1 inhibits activation. Activated by binding small G proteins. Binding of GTP-bound CDC42 or RAC1 to the autoregulatory region releases monomers from the autoinhibited dimer, and enables activation by phosphorylation of Thr-423. Functionally, protein kinase involved in intracellular signaling pathways downstream of integrins and receptor-type kinases that plays an important role in cytoskeleton dynamics, in cell adhesion, migration, proliferation, apoptosis, mitosis, and in vesicle-mediated transport processes. Can directly phosphorylate BAD and protects cells against apoptosis. Activated by interaction with CDC42 and RAC1. Functions as a GTPase effector that links the Rho-related GTPases CDC42 and RAC1 to the JNK MAP kinase pathway. Phosphorylates and activates MAP2K1, and thereby mediates activation of downstream MAP kinases. Involved in the reorganization of the actin cytoskeleton, actin stress fibers and of focal adhesion complexes. Phosphorylates the tubulin chaperone TBCB and thereby plays a role in the regulation of microtubule biogenesis and organization of the tubulin cytoskeleton. Plays a role in the regulation of insulin secretion in response to elevated glucose levels. Part of a ternary complex that contains PAK1, DVL1 and MUSK that is important for MUSK-dependent regulation of AChR clustering during the formation of the neuromuscular junction (NMJ). Activity is inhibited in cells undergoing apoptosis, potentially due to binding of CDC2L1 and CDC2L2. Phosphorylates MYL9/MLC2. Phosphorylates RAF1 at 'Ser-338' and 'Ser-339' resulting in: activation of RAF1, stimulation of RAF1 translocation to mitochondria, phosphorylation of BAD by RAF1, and RAF1 binding to BCL2. Phosphorylates SNAI1 at 'Ser-246' promoting its transcriptional repressor activity by increasing its accumulation in the nucleus. In podocytes, promotes NR3C2 nuclear localization. Required for atypical chemokine receptor ACKR2-induced phosphorylation of LIMK1 and cofilin (CFL1) and for the up-regulation of ACKR2 from endosomal compartment to cell membrane, increasing its efficiency in chemokine uptake and degradation. In synapses, seems to mediate the regulation of F-actin cluster formation performed by SHANK3, maybe through CFL1 phosphorylation and inactivation. Plays a role in RUFY3-mediated facilitating gastric cancer cells migration and invasion. In response to DNA damage, phosphorylates MORC2 which activates its ATPase activity and facilitates chromatin remodeling. In neurons, plays a crucial role in regulating GABA(A) receptor synaptic stability and hence GABAergic inhibitory synaptic transmission through its role in F-actin stabilization. In hippocampal neurons, necessary for the formation of dendritic spines and excitatory synapses; this function is dependent on kinase activity and may be exerted by the regulation of actomyosin contractility through the phosphorylation of myosin II regulatory light chain (MLC). Along with GIT1, positively regulates microtubule nucleation during interphase. Phosphorylates FXR1, promoting its localization to stress granules and activity. Phosphorylates ILK on 'Thr-173' and 'Ser-246', promoting nuclear export of ILK. This chain is Serine/threonine-protein kinase PAK 1, found in Mus musculus (Mouse).